The chain runs to 318 residues: MLSESSSFLKGVMLGSIFCALITMLGHIRIGHGNRMHHHEHHHLQAPNKEDILKISEDERMELSKSFRVYCIILVKPKDVSLWAAVKETWTKHCDKAEFFSSENVKVFESINMDTNDMWLMMRKAYKYAFDKYRDQYNWFFLARPTTFAIIENLKYFLLKKDPSQPFYLGHTIKSGDLEYVGMEGGIVLSVESMKRLNSLLNIPEKCPEQGGMIWKISEDKQLAVCLKYAGVFAENAEDADGKDVFNTKSVGLSIKEAMTYHPNQVVEGCCSDMAVTFNGLTPNQMHVMMYGVYRLRAFGHIFNDALVFLPPNGSDND.

Residues 1-6 are Cytoplasmic-facing; the sequence is MLSESS. Residues 7 to 26 traverse the membrane as a helical; Signal-anchor for type II membrane protein segment; sequence SFLKGVMLGSIFCALITMLG. Residues 27-318 are Lumenal-facing; that stretch reads HIRIGHGNRM…FLPPNGSDND (292 aa).

This sequence belongs to the glycosyltransferase 31 family. Beta3-Gal-T subfamily. Associates with core 1 beta-3-galactosyltransferase (C1GALT1), probably not with the soluble active form. In terms of tissue distribution, ubiquitously expressed. Abundantly expressed in salivary gland, stomach, small intestine, kidney, and testis and at intermediate levels in whole brain, cerebellum, spinal cord, thymus, spleen, trachea, lung, pancreas, ovary, and uterus.

It is found in the membrane. Functionally, probable chaperone required for the generation of 1 O-glycan Gal-beta1-3GalNAc-alpha1-Ser/Thr (T antigen), which is a precursor for many extended O-glycans in glycoproteins. Probably acts as a specific molecular chaperone assisting the folding/stability of core 1 beta-3-galactosyltransferase (C1GALT1). The polypeptide is C1GALT1-specific chaperone 1 (C1GALT1C1) (Homo sapiens (Human)).